A 376-amino-acid polypeptide reads, in one-letter code: Phosphoserine aminotransferase (376 aa).

Arg-42 provides a ligand contact to L-glutamate. Positions 104, 163, 188, and 211 each coordinate pyridoxal 5'-phosphate. At Lys-212 the chain carries N6-(pyridoxal phosphate)lysine. 253–254 (NT) serves as a coordination point for pyridoxal 5'-phosphate.

Belongs to the class-V pyridoxal-phosphate-dependent aminotransferase family. SerC subfamily. In terms of assembly, homodimer. Pyridoxal 5'-phosphate serves as cofactor.

The protein localises to the cytoplasm. It carries out the reaction O-phospho-L-serine + 2-oxoglutarate = 3-phosphooxypyruvate + L-glutamate. The enzyme catalyses 4-(phosphooxy)-L-threonine + 2-oxoglutarate = (R)-3-hydroxy-2-oxo-4-phosphooxybutanoate + L-glutamate. Its pathway is amino-acid biosynthesis; L-serine biosynthesis; L-serine from 3-phospho-D-glycerate: step 2/3. It participates in cofactor biosynthesis; pyridoxine 5'-phosphate biosynthesis; pyridoxine 5'-phosphate from D-erythrose 4-phosphate: step 3/5. Functionally, catalyzes the reversible conversion of 3-phosphohydroxypyruvate to phosphoserine and of 3-hydroxy-2-oxo-4-phosphonooxybutanoate to phosphohydroxythreonine. The protein is Phosphoserine aminotransferase of Bordetella avium (strain 197N).